Reading from the N-terminus, the 123-residue chain is Large ribosomal subunit protein uL18 (123 aa).

The protein belongs to the universal ribosomal protein uL18 family. Part of the 50S ribosomal subunit; part of the 5S rRNA/L5/L18/L25 subcomplex. Contacts the 5S and 23S rRNAs.

Its function is as follows. This is one of the proteins that bind and probably mediate the attachment of the 5S RNA into the large ribosomal subunit, where it forms part of the central protuberance. The sequence is that of Large ribosomal subunit protein uL18 from Bifidobacterium animalis subsp. lactis (strain AD011).